Consider the following 424-residue polypeptide: Dapdiamide A synthase (424 aa).

Residues 120–318 (QEQLALKGVA…QISKLAQAVL (199 aa)) form the ATP-grasp domain. 147-209 (AGHAHWPVVL…QEFLAGEEFV (63 aa)) is a binding site for ATP. Residues Glu-275 and Glu-287 each contribute to the Mg(2+) site.

It depends on Mg(2+) as a cofactor. Requires Mn(2+) as cofactor.

It catalyses the reaction 3-[[[(2R,3R)-3-carboxyoxiran-2-yl]carbonyl]amino]-L-alanine + L-valine + ATP = dapdiamide E + ADP + phosphate + H(+). The enzyme catalyses N(3)-fumaramoyl-(S)-2,3-diaminopropanoate + L-valine + ATP = dapdiamide A + ADP + phosphate + H(+). It carries out the reaction N(3)-fumaramoyl-(S)-2,3-diaminopropanoate + L-isoleucine + ATP = dapdiamide B + ADP + phosphate + H(+). The catalysed reaction is N(3)-fumaramoyl-(S)-2,3-diaminopropanoate + L-leucine + ATP = dapdiamide C + ADP + phosphate + H(+). It functions in the pathway antibiotic biosynthesis. Its function is as follows. Involved in dapdiamide antibiotics biosynthesis. Ligates N-beta-fumaramoyl-DAP and valine, isoleucine or leucine to form dapdiamides A, B or C, respectively. Also ligates N-beta-epoxysuccinamoyl-DAP and valine to form dapdiamide E. The sequence is that of Dapdiamide A synthase from Enterobacter agglomerans (Erwinia herbicola).